Here is a 118-residue protein sequence, read N- to C-terminus: Large ribosomal subunit protein uL18 (118 aa).

It belongs to the universal ribosomal protein uL18 family. In terms of assembly, part of the 50S ribosomal subunit; part of the 5S rRNA/L5/L18/L25 subcomplex. Contacts the 5S and 23S rRNAs.

This is one of the proteins that bind and probably mediate the attachment of the 5S RNA into the large ribosomal subunit, where it forms part of the central protuberance. The protein is Large ribosomal subunit protein uL18 of Campylobacter concisus (strain 13826).